The primary structure comprises 207 residues: Proteasome subunit beta 2 (207 aa).

Residues 1–10 (MLQLTEKFKG) constitute a propeptide, removed in mature form; by autocatalysis. Residue T11 is the Nucleophile of the active site.

This sequence belongs to the peptidase T1B family. As to quaternary structure, the 20S proteasome core is composed of 14 alpha and 14 beta subunits that assemble into four stacked heptameric rings, resulting in a barrel-shaped structure. The two inner rings, each composed of seven catalytic beta subunits, are sandwiched by two outer rings, each composed of seven alpha subunits. The catalytic chamber with the active sites is on the inside of the barrel. Has a gated structure, the ends of the cylinder being occluded by the N-termini of the alpha-subunits. Is capped at one or both ends by the proteasome regulatory ATPase, PAN.

Its subcellular location is the cytoplasm. It catalyses the reaction Cleavage of peptide bonds with very broad specificity.. With respect to regulation, the formation of the proteasomal ATPase PAN-20S proteasome complex, via the docking of the C-termini of PAN into the intersubunit pockets in the alpha-rings, triggers opening of the gate for substrate entry. Interconversion between the open-gate and close-gate conformations leads to a dynamic regulation of the 20S proteasome proteolysis activity. Component of the proteasome core, a large protease complex with broad specificity involved in protein degradation. The chain is Proteasome subunit beta 2 from Pyrococcus abyssi (strain GE5 / Orsay).